The following is a 134-amino-acid chain: Profilin-2 (134 aa).

Residues cysteine 13 and cysteine 118 are joined by a disulfide bond. Positions 84–100 (AVIRGKKGSGGITIKKT) match the Involved in PIP2 interaction motif. Threonine 114 bears the Phosphothreonine mark.

This sequence belongs to the profilin family. In terms of assembly, occurs in many kinds of cells as a complex with monomeric actin in a 1:1 ratio. Phosphorylated by MAP kinases.

The protein localises to the cytoplasm. It localises to the cytoskeleton. Its function is as follows. Binds to actin and affects the structure of the cytoskeleton. At high concentrations, profilin prevents the polymerization of actin, whereas it enhances it at low concentrations. The chain is Profilin-2 from Olea europaea (Common olive).